We begin with the raw amino-acid sequence, 101 residues long: Guanyl-specific ribonuclease St (101 aa).

Residues Cys-4 and Cys-54 are joined by a disulfide bond. Glu-61 functions as the Proton acceptor in the catalytic mechanism. Catalysis depends on His-91, which acts as the Proton donor.

It belongs to the ribonuclease N1/T1 family.

The catalysed reaction is [RNA] containing guanosine + H2O = an [RNA fragment]-3'-guanosine-3'-phosphate + a 5'-hydroxy-ribonucleotide-3'-[RNA fragment].. The sequence is that of Guanyl-specific ribonuclease St from Saccharopolyspora erythraea (Streptomyces erythraeus).